We begin with the raw amino-acid sequence, 489 residues long: uncharacterized protein (489 aa).

12 helical membrane-spanning segments follow: residues 14 to 34 (LLFVVNYIAGFGFIATAISLF), 36 to 56 (LGPFSWLIFLLVSLVSLIVTL), 100 to 120 (IIGPLSAATAPLFILNSFSGI), 127 to 147 (LVNTWILIAIGFSFYVLLAFI), 158 to 178 (LIALFASVKWIVILSALIVAI), 203 to 223 (EISFAQIATVFITFFYSYAGV), 241 to 261 (ILIVSFIAVFLFYFIGIIILN), 286 to 306 (AAGLGTLIFYGVGALFNNVST), 344 to 364 (IWFTFGTTLIAMTLLVFIPLV), 380 to 400 (VGSAATLLQYIFVFFIIFKFI), 419 to 439 (LFCLGTIVIVLMLLVYLFPVI), and 449 to 469 (HTLTIVLYGVLSLIGLVLFLL).

The protein to M.genitalium MG226.

It localises to the cell membrane. This is an uncharacterized protein from Mycoplasma genitalium (strain ATCC 33530 / DSM 19775 / NCTC 10195 / G37) (Mycoplasmoides genitalium).